Here is a 248-residue protein sequence, read N- to C-terminus: Pyridoxine 5'-phosphate synthase (248 aa).

Residues N8 and R19 each contribute to the 3-amino-2-oxopropyl phosphate site. The active-site Proton acceptor is the H44. 1-deoxy-D-xylulose 5-phosphate-binding residues include R46 and H51. The active-site Proton acceptor is E76. Residue T106 participates in 1-deoxy-D-xylulose 5-phosphate binding. The active-site Proton donor is H200. 3-amino-2-oxopropyl phosphate is bound by residues D201 and 223 to 224 (GH).

The protein belongs to the PNP synthase family. As to quaternary structure, homooctamer; tetramer of dimers.

Its subcellular location is the cytoplasm. The catalysed reaction is 3-amino-2-oxopropyl phosphate + 1-deoxy-D-xylulose 5-phosphate = pyridoxine 5'-phosphate + phosphate + 2 H2O + H(+). The protein operates within cofactor biosynthesis; pyridoxine 5'-phosphate biosynthesis; pyridoxine 5'-phosphate from D-erythrose 4-phosphate: step 5/5. Its function is as follows. Catalyzes the complicated ring closure reaction between the two acyclic compounds 1-deoxy-D-xylulose-5-phosphate (DXP) and 3-amino-2-oxopropyl phosphate (1-amino-acetone-3-phosphate or AAP) to form pyridoxine 5'-phosphate (PNP) and inorganic phosphate. In Chelativorans sp. (strain BNC1), this protein is Pyridoxine 5'-phosphate synthase.